A 190-amino-acid polypeptide reads, in one-letter code: MLSEFFNNITSFFVNIFSLFEGKRNIRILMIGLDGAGKSTLLYKLKFGDVIRTIPTIGFNVEIIEYKNLSMNVWDIGGQNNIRALWRQYDQRTDVFIFVVDSTDRERFDEVKQEIKNIIEQNKNESSNASLLIFANKQDMLNPITPAELVNSLDLNSLTNKKWHVQPCSAVRGDGIYEGFDWIVSNSSGK.

GTP is bound by residues 34-40 (DGAGKST), 75-79 (DIGGQ), and 136-139 (NKQD).

This sequence belongs to the small GTPase superfamily. Arf family.

It localises to the golgi apparatus. In terms of biological role, GTP-binding protein that may be involved in protein trafficking. May modulate vesicle budding and uncoating within the Golgi apparatus. In Dictyostelium discoideum (Social amoeba), this protein is ADP-ribosylation factor F (arrF).